The chain runs to 158 residues: Cyclic pyranopterin monophosphate synthase (158 aa).

Residues 75–77 (LCH) and 113–114 (ME) contribute to the substrate site. D128 is a catalytic residue.

Belongs to the MoaC family. In terms of assembly, homohexamer; trimer of dimers.

The enzyme catalyses (8S)-3',8-cyclo-7,8-dihydroguanosine 5'-triphosphate = cyclic pyranopterin phosphate + diphosphate. It participates in cofactor biosynthesis; molybdopterin biosynthesis. In terms of biological role, catalyzes the conversion of (8S)-3',8-cyclo-7,8-dihydroguanosine 5'-triphosphate to cyclic pyranopterin monophosphate (cPMP). The chain is Cyclic pyranopterin monophosphate synthase from Roseiflexus sp. (strain RS-1).